Reading from the N-terminus, the 2230-residue chain is Probable serine/threonine-protein kinase DDB_G0267686 (2230 aa).

Low complexity predominate over residues 1 to 12 (MEPNNNISNSNN). Disordered stretches follow at residues 1–22 (MEPN…GDGK), 121–152 (NNNS…QLNN), 270–352 (DEKE…DKIS), 368–397 (PIIN…RLSS), 430–451 (NGAS…ILST), 464–574 (KNSS…NSPS), 593–620 (GSGS…NSST), 699–849 (QHQQ…LLPS), and 915–974 (SNQI…SSNS). A compositionally biased stretch (basic and acidic residues) spans 270-336 (DEKENKEGGQ…NENEKNHNDK (67 aa)). Acidic residues predominate over residues 337-346 (NDDDDDDEDN). 6 stretches are compositionally biased toward low complexity: residues 375–388 (SSSN…NNSI), 430–447 (NGAS…GPTP), 473–574 (NNNN…NSPS), 593–602 (GSGSSSLGKG), 610–619 (SYSNNNNNSS), and 699–721 (QHQQ…QQQL). Polar residues predominate over residues 722–731 (KSRSNTTNTP). Positions 745–754 (NSPPVSPPSS) are enriched in pro residues. Composition is skewed to low complexity over residues 755–766 (PMLSPLSSSPPS) and 783–818 (TGSL…RSNS). Positions 840–849 (YNTTPPLLPS) are enriched in polar residues. Residues 991–1119 (SLSALMKDRI…CILHSTTNGT (129 aa)) form the RGS domain. Disordered regions lie at residues 1146–1181 (SKET…INNN), 1220–1243 (KLSH…NQPL), 1300–1362 (LSPP…GDQT), 1506–1546 (QQQQ…QPQQ), 1563–1611 (PTIP…NNNS), 1725–1771 (VSNN…NNGN), 1802–1848 (NNLM…NNNH), and 1905–1929 (ENNT…TISQ). 2 stretches are compositionally biased toward low complexity: residues 1149 to 1181 (TSNS…INNN) and 1222 to 1239 (SHSN…SYTS). The segment covering 1324-1353 (TNGSMKSSLFQQQLQPTGSINSSPINNHQV) has biased composition (polar residues). 2 stretches are compositionally biased toward low complexity: residues 1506–1520 (QQQQ…QFQP) and 1530–1546 (PSSN…QPQQ). A compositionally biased stretch (low complexity) spans 1726 to 1769 (SNNNNINSNNNNNNNNNNNNNNNNNNNNNNNNNNNNNNNSNNNN). Positions 1905-1915 (ENNTTTTTTTT) are enriched in low complexity. The span at 1916–1929 (SNRPFRSNNPTISQ) shows a compositional bias: polar residues. Residues 1949 to 2208 (IVFLNKLGEG…SCPEILDSLL (260 aa)) form the Protein kinase domain. ATP contacts are provided by residues 1955 to 1963 (LGEGTSAKV) and lysine 1976. Catalysis depends on aspartate 2069, which acts as the Proton acceptor.

It belongs to the protein kinase superfamily. TKL Ser/Thr protein kinase family.

The catalysed reaction is L-seryl-[protein] + ATP = O-phospho-L-seryl-[protein] + ADP + H(+). The enzyme catalyses L-threonyl-[protein] + ATP = O-phospho-L-threonyl-[protein] + ADP + H(+). The chain is Probable serine/threonine-protein kinase DDB_G0267686 from Dictyostelium discoideum (Social amoeba).